The primary structure comprises 153 residues: Large ribosomal subunit protein uL15 (153 aa).

Positions 15–42 (ARRIVGRGSSSGRGTTSGRGTKGQQARA) are disordered. A compositionally biased stretch (gly residues) spans 23-35 (SSSGRGTTSGRGT).

Belongs to the universal ribosomal protein uL15 family. As to quaternary structure, part of the 50S ribosomal subunit.

Binds to the 23S rRNA. The polypeptide is Large ribosomal subunit protein uL15 (Treponema pallidum (strain Nichols)).